Reading from the N-terminus, the 408-residue chain is E3 ubiquitin-protein ligase At1g12760 (408 aa).

Residues 1–52 form a disordered region; sequence MSTETTTGNSSLIPASSSSSSSDAIDPAPLLFNGDDNEGNNGGGGGERRSVR. Positions 10–34 are enriched in low complexity; the sequence is SSLIPASSSSSSSDAIDPAPLLFNG. The next 2 membrane-spanning stretches (helical) occupy residues 100-120 and 133-153; these read VVVL…AILV and VWLL…CVEY. The tract at residues 160 to 195 is disordered; it reads RTNRTTTTTPPRSRSSSSSSSSSSLEEEALGSRRNS. Residues 163-183 are compositionally biased toward low complexity; it reads RTTTTTPPRSRSSSSSSSSSS. A run of 3 helical transmembrane segments spans residues 219–239, 254–274, and 275–295; these read ANTM…SAGG, IVFL…ACVI, and GIAV…VADQ. The RING-type; atypical zinc-finger motif lies at 353 to 394; that stretch reads CCICLSAYEDGTELRELPCGHHFHCSCVDKWLYINATCPLCK.

The protein resides in the membrane. It carries out the reaction S-ubiquitinyl-[E2 ubiquitin-conjugating enzyme]-L-cysteine + [acceptor protein]-L-lysine = [E2 ubiquitin-conjugating enzyme]-L-cysteine + N(6)-ubiquitinyl-[acceptor protein]-L-lysine.. The protein operates within protein modification; protein ubiquitination. Functionally, mediates E2-dependent protein ubiquitination in vitro. The chain is E3 ubiquitin-protein ligase At1g12760 from Arabidopsis thaliana (Mouse-ear cress).